A 314-amino-acid chain; its full sequence is UDP-glucose 4-epimerase (314 aa).

Residues 11-12, 31-36, 56-57, and 77-81 each bind NAD(+); these read FI, DNFATG, DI, and LAAQI. The substrate site is built by serine 121 and tyrosine 146. NAD(+) contacts are provided by tyrosine 146 and lysine 150. The active-site Proton acceptor is the tyrosine 146. Substrate-binding positions include asparagine 175, 189–190, 204–206, arginine 213, and 271–274; these read VV, RVF, and RLGD.

This sequence belongs to the NAD(P)-dependent epimerase/dehydratase family. Homodimer. It depends on NAD(+) as a cofactor.

It carries out the reaction UDP-alpha-D-glucose = UDP-alpha-D-galactose. Its pathway is carbohydrate metabolism; galactose metabolism. Its function is as follows. Involved in the metabolism of galactose. Catalyzes the conversion of UDP-galactose (UDP-Gal) to UDP-glucose (UDP-Glc) through a mechanism involving the transient reduction of NAD. This Mycobacterium tuberculosis (strain CDC 1551 / Oshkosh) protein is UDP-glucose 4-epimerase (galE1).